The sequence spans 856 residues: Histone-lysine N-methyltransferase EZA1 (856 aa).

Residues 1–11 are compositionally biased toward polar residues; the sequence is MVTDDSNSSGR. Disordered stretches follow at residues 1–34, 66–87, and 366–473; these read MVTD…GLEN, VSPF…NSNM, and NVDS…HHGS. The span at 17-28 shows a compositional bias: acidic residues; it reads DDDDDGEEEEDR. Residues 22–49 are a coiled coil; it reads GEEEEDRLEGLENRLSELKRKIQGERVR. Polar residues predominate over residues 68-87; the sequence is PFSSAASSRATAEDNGNSNM. Positions 374–392 are enriched in basic and acidic residues; sequence EQEHGIRGKREVPILKDSN. Residues 393 to 419 are compositionally biased toward polar residues; that stretch reads DLPNLSNKKQKTAASDTKMSFVNSVPS. The span at 438-451 shows a compositional bias: basic and acidic residues; that stretch reads KVNRDSEADAKEVG. Positions 489 to 539 constitute an SANT domain; it reads PSTEWNPIEKDLYLKGVEIFGRNSCLIARNLLSGLKTCLDVSNYMRENEVS. The region spanning 594–693 is the CXC domain; it reads WKRIAGGKNQ…SLGEAPRRGE (100 aa). Residues 707-822 enclose the SET domain; sequence QRILLGKSDV…ASEELFYDYR (116 aa). Tyr821 provides a ligand contact to S-adenosyl-L-methionine. The segment at 827–856 is disordered; sequence QAPVWARKPEGSKKDDSAITHRRARKHQSH. Over residues 833 to 845 the composition is skewed to basic and acidic residues; that stretch reads RKPEGSKKDDSAI. The Nuclear localization signal signature appears at 838-845; that stretch reads SKKDDSAI. A compositionally biased stretch (basic residues) spans 846–856; it reads THRRARKHQSH.

The protein belongs to the class V-like SAM-binding methyltransferase superfamily. Histone-lysine methyltransferase family. EZ subfamily. As to quaternary structure, component of the plant homeodomain / polycomb repressive complex 2 (PHD-PRC2) large complex during prolonged cold, composed of core PRC2 components (VRN2, EZA1, FIE and MSI1), and three related PHD finger proteins (VIL1, VIL2 and VIN3) that mediates histone H3 trimethylation on 'Lys-27' H3K27me3. Interacts with TAF13. Interacts with EOL1. Interacts (via SANT domain) with HXK1 in the nucleus.

The protein resides in the nucleus. It catalyses the reaction L-lysyl(27)-[histone H3] + 3 S-adenosyl-L-methionine = N(6),N(6),N(6)-trimethyl-L-lysyl(27)-[histone H3] + 3 S-adenosyl-L-homocysteine + 3 H(+). Its function is as follows. Polycomb group (PcG) protein. Catalytic subunit of some PcG multiprotein complex, which methylates 'Lys-27' of histone H3, leading to transcriptional repression of the affected target genes, mainly abscisic acid (ABA) responsive elements. PcG proteins act by forming multiprotein complexes, which are required to maintain the transcriptionally repressive state of homeotic genes throughout development. PcG proteins are not required to initiate repression, but to maintain it during later stages of development. Forms a nuclear complex with CLF and HXK1 to target common glucose-responsive genes and regulate glucose signaling by glucose-mediated gene repression. Affects the recruitment of HXK1 to the target chromatin. In Arabidopsis thaliana (Mouse-ear cress), this protein is Histone-lysine N-methyltransferase EZA1.